We begin with the raw amino-acid sequence, 124 residues long: uncharacterized protein (124 aa).

It is found in the cytoplasm. The protein resides in the nucleus. This is an uncharacterized protein from Schizosaccharomyces pombe (strain 972 / ATCC 24843) (Fission yeast).